The primary structure comprises 198 residues: Thioredoxin reductase-like selenoprotein T homolog CG3887 (198 aa).

The N-terminal stretch at 1 to 25 (MERLTGRNVALLVLCLCAGYALVFA) is a signal peptide. The cysteines at positions 49 and 52 are disulfide-linked.

Belongs to the SelWTH family. SELT subfamily.

It carries out the reaction [thioredoxin]-dithiol + NADP(+) = [thioredoxin]-disulfide + NADPH + H(+). Probably has thioredoxin reductase-like oxidoreductase activity. This is Thioredoxin reductase-like selenoprotein T homolog CG3887 from Drosophila melanogaster (Fruit fly).